The chain runs to 229 residues: 2-C-methyl-D-erythritol 4-phosphate cytidylyltransferase (229 aa).

It belongs to the IspD/TarI cytidylyltransferase family. IspD subfamily.

It catalyses the reaction 2-C-methyl-D-erythritol 4-phosphate + CTP + H(+) = 4-CDP-2-C-methyl-D-erythritol + diphosphate. It functions in the pathway isoprenoid biosynthesis; isopentenyl diphosphate biosynthesis via DXP pathway; isopentenyl diphosphate from 1-deoxy-D-xylulose 5-phosphate: step 2/6. Catalyzes the formation of 4-diphosphocytidyl-2-C-methyl-D-erythritol from CTP and 2-C-methyl-D-erythritol 4-phosphate (MEP). This chain is 2-C-methyl-D-erythritol 4-phosphate cytidylyltransferase, found in Neisseria gonorrhoeae (strain NCCP11945).